The following is a 1299-amino-acid chain: DExH-box ATP-dependent RNA helicase DExH6 (1299 aa).

The 68-residue stretch at 15-82 folds into the R3H domain; the sequence is PTSVEATRIW…QRRLSIFKSR (68 aa). The Helicase ATP-binding domain occupies 197–366; the sequence is TSAVESNQVI…FGGCPVVRVP (170 aa). Residue 210-217 participates in ATP binding; it reads GETGCGKT. A DEIH box motif is present at residues 313 to 316; that stretch reads DEIH. Residues 537–711 form the Helicase C-terminal domain; the sequence is LIQQLMRKIC…ELCLQVKILD (175 aa). Disordered regions lie at residues 987-1039 and 1175-1299; these read PTGS…MMSS and IPRQ…AEQK. The segment covering 992–1006 has biased composition (acidic residues); that stretch reads DSDDSNEEEEDDEEV. Positions 1007-1020 are enriched in low complexity; it reads AANTNEEVAANTNE. Basic and acidic residues predominate over residues 1023-1032; the sequence is MDIHKEESRR. Polar residues-rich tracts occupy residues 1176–1193, 1204–1214, and 1239–1251; these read PRQQ…NNTD, NPTNRINQPEA, and PSDQ…QHNT. Residues 1182–1200 carry the Bipartite nuclear localization signal motif; the sequence is KQRNPKATNNTDSGKKKEK. The short motif at 1267 to 1283 is the Bipartite nuclear localization signal element; the sequence is KKTKTRSGNNSDSGKKK. Residues 1279–1299 show a composition bias toward basic and acidic residues; that stretch reads SGKKKEQYIPKRQREDKAEQK.

This sequence belongs to the DExH box helicase family. As to expression, specifically expressed in the tapetum and vascular tissues.

The protein resides in the nucleus. The catalysed reaction is ATP + H2O = ADP + phosphate + H(+). In terms of biological role, may function as an ATP-dependent RNA/DNA helicase. The sequence is that of DExH-box ATP-dependent RNA helicase DExH6 from Arabidopsis thaliana (Mouse-ear cress).